The sequence spans 427 residues: Carboxyl-terminal-processing protease (427 aa).

The first 31 residues, 1–31 (MGKRTRRFWALAFSLLMGALIYLGNTPSALA), serve as a signal peptide directing secretion. The PDZ domain maps to 104 to 186 (NLQVTTTGEL…TKVSLEILSA (83 aa)). Catalysis depends on charge relay system residues serine 313, aspartate 324, and lysine 338.

The protein belongs to the peptidase S41A family.

The protein resides in the cellular thylakoid lumen. It carries out the reaction The enzyme shows specific recognition of a C-terminal tripeptide, Xaa-Yaa-Zaa, in which Xaa is preferably Ala or Leu, Yaa is preferably Ala or Tyr, and Zaa is preferably Ala, but then cleaves at a variable distance from the C-terminus. A typical cleavage is -Ala-Ala-|-Arg-Ala-Ala-Lys-Glu-Asn-Tyr-Ala-Leu-Ala-Ala.. Cleavage of the 16 C-terminal residues from the D1 precursor of photosystem II (PSII). This proteolytic processing is necessary to allow the light-driven assembly of the oxygen-evolving cluster (a tetranuclear manganese), which is responsible for photosynthetic water oxidation. This chain is Carboxyl-terminal-processing protease (ctpA), found in Synechocystis sp. (strain ATCC 27184 / PCC 6803 / Kazusa).